A 527-amino-acid chain; its full sequence is Catalase (527 aa).

Residues 1-22 are compositionally biased toward basic and acidic residues; the sequence is MADSRDPASDQMKLWKEQRAAQ. A disordered region spans residues 1–34; the sequence is MADSRDPASDQMKLWKEQRAAQKPDVLTTGGGNP. A2 is subject to N-acetylalanine. S9 carries the post-translational modification Phosphoserine. N6-succinyllysine is present on K13. Residues H75 and N148 contribute to the active site. Residues H194, S201, R203, and N213 each coordinate NADP(+). K221 is subject to N6-succinyllysine. Position 233 is an N6-acetyllysine (K233). Positions 237, 303, and 305 each coordinate NADP(+). Residue Y358 participates in heme binding. Phosphoserine is present on residues S422 and S434. K449 and K480 each carry N6-acetyllysine; alternate. An N6-succinyllysine; alternate mark is found at K449 and K480. K499 carries the N6-acetyllysine modification. T511 bears the Phosphothreonine mark. At S517 the chain carries Phosphoserine. Positions 524-527 match the Microbody targeting signal; atypical motif; sequence KANL.

Belongs to the catalase family. As to quaternary structure, homotetramer. Interacts (via microbody targeting signal) with PEX5, monomeric form interacts with PEX5, leading to its translocation into peroxisomes. It depends on heme as a cofactor. NADP(+) is required as a cofactor.

It is found in the peroxisome matrix. The enzyme catalyses 2 H2O2 = O2 + 2 H2O. In terms of biological role, catalyzes the degradation of hydrogen peroxide (H(2)O(2)) generated by peroxisomal oxidases to water and oxygen, thereby protecting cells from the toxic effects of hydrogen peroxide. Promotes growth of cells including T-cells, B-cells, myeloid leukemia cells, melanoma cells, mastocytoma cells and normal and transformed fibroblast cells. This is Catalase (CAT) from Canis lupus familiaris (Dog).